A 252-amino-acid chain; its full sequence is Transmembrane ascorbate-dependent reductase CYB561 (252 aa).

Methionine 1 bears the N-acetylmethionine mark. Residues 1–17 are Cytoplasmic-facing; the sequence is MESPAGRTPAPGALPYY. Residues 18–38 traverse the membrane as a helical segment; it reads VAFSQLLGLTVVAVTGAWLGA. Positions 20 to 221 constitute a Cytochrome b561 domain; it reads FSQLLGLTVV…FGAVVLYILT (202 aa). The Vesicular segment spans residues 39–52; the sequence is YRGGIAWESALQFN. The helical transmembrane segment at 53–73 threads the bilayer; the sequence is VHPLCMIIGLVFLQGDALLVY. Positions 54, 74, and 81 each coordinate heme b. Topologically, residues 74–85 are cytoplasmic; sequence RVFRNEAKRTTK. Lysine 81 and lysine 85 together coordinate L-ascorbate. The helical transmembrane segment at 86 to 106 threads the bilayer; the sequence is ILHGLLHVLAFVIALVGLVAV. Heme b-binding positions include histidine 88, 117-120, and histidine 122; that span reads DLYS. The Vesicular portion of the chain corresponds to 107-125; sequence FDYHRKKGIADLYSLHSWC. Residues 126 to 146 traverse the membrane as a helical segment; that stretch reads GILVFVLFLAQWLVGLGFFLF. At 147 to 159 the chain is on the cytoplasmic side; the sequence is PGASFSLRSRYRP. Arginine 154 contributes to the L-ascorbate binding site. The chain crosses the membrane as a helical span at residues 160 to 180; that stretch reads QHVFFGAAIFLLSVGTALLGL. Positions 161 and 182 each coordinate heme b. Topologically, residues 181–199 are vesicular; the sequence is KEALLFQLGTKYSAFESEG. A helical transmembrane segment spans residues 200–220; the sequence is VLANVLGLLLVAFGAVVLYIL. Topologically, residues 221-252 are cytoplasmic; that stretch reads TRADWKRPLQAEEQALSMDFKTLTEGDSPSSQ. Lysine 226 serves as a coordination point for heme b. Serine 248 and serine 250 each carry phosphoserine.

Heme b is required as a cofactor.

The protein localises to the cytoplasmic vesicle. It is found in the secretory vesicle. Its subcellular location is the chromaffin granule membrane. The catalysed reaction is monodehydro-L-ascorbate radical(out) + L-ascorbate(in) = monodehydro-L-ascorbate radical(in) + L-ascorbate(out). Transmembrane reductase that uses ascorbate as an electron donor in the cytoplasm and transfers electrons across membranes to reduce monodehydro-L-ascorbate radical in the lumen of secretory vesicles. It is therefore involved the regeneration and homeostasis within secretory vesicles of ascorbate which in turn provides reducing equivalents needed to support the activity of intravesicular enzymes. This Sus scrofa (Pig) protein is Transmembrane ascorbate-dependent reductase CYB561 (CYB561).